The chain runs to 201 residues: Putative Ras-related protein Rab-1C (201 aa).

GTP contacts are provided by residues 15–23 (GDSGVGKSC), 33–40 (YTESYIST), and 63–67 (DTAGQ). An Effector region motif is present at residues 37-45 (YISTIGVDF). The residue at position 76 (Ser76) is a (Microbial infection) O-(2-cholinephosphoryl)serine. GTP contacts are provided by residues 121–124 (NKSD) and 151–153 (SAK). The interval 174–201 (GPGAASGGERPNLKIDSTPVKPAGGGCC) is disordered. S-geranylgeranyl cysteine attachment occurs at residues Cys200 and Cys201.

Belongs to the small GTPase superfamily. Rab family. (Microbial infection) Phosphocholinated at Ser-76 by L.pneumophila AnkX, leading to displace GDP dissociation inhibitors (GDI). Both GDP-bound and GTP-bound forms can be phosphocholinated. Dephosphocholinated by L.pneumophila Lem3, restoring accessibility to L.pneumophila GTPase effector LepB. In terms of processing, (Microbial infection) Glycosylated by S.typhimurium protein Ssek3: arginine GlcNAcylation prevents GTPase activity, thereby disrupting vesicular protein transport from the endoplasmic reticulum (ER) to the Golgi compartment.

The protein localises to the membrane. The protein resides in the cytoplasm. It catalyses the reaction GTP + H2O = GDP + phosphate + H(+). Its function is as follows. Protein transport. Probably involved in vesicular traffic. This is Putative Ras-related protein Rab-1C (RAB1C) from Homo sapiens (Human).